Reading from the N-terminus, the 397-residue chain is Phosphoglycerate kinase (397 aa).

Residues 21-23 (DFN), R37, 60-63 (HLGR), R119, and R152 each bind substrate. ATP-binding positions include K202, G294, E325, and 351 to 354 (GGDS).

This sequence belongs to the phosphoglycerate kinase family. Monomer.

It is found in the cytoplasm. The catalysed reaction is (2R)-3-phosphoglycerate + ATP = (2R)-3-phospho-glyceroyl phosphate + ADP. Its pathway is carbohydrate degradation; glycolysis; pyruvate from D-glyceraldehyde 3-phosphate: step 2/5. The sequence is that of Phosphoglycerate kinase from Pseudothermotoga lettingae (strain ATCC BAA-301 / DSM 14385 / NBRC 107922 / TMO) (Thermotoga lettingae).